We begin with the raw amino-acid sequence, 212 residues long: NADH dehydrogenase [ubiquinone] iron-sulfur protein 8, mitochondrial (212 aa).

A mitochondrion-targeting transit peptide spans 1-34 (MYRLSSSMLPRALAQAMRTGHLNGQSLHSSAVAA). 4Fe-4S ferredoxin-type domains lie at 104 to 133 (RRYP…IEAE) and 143 to 172 (TRYD…EGPN). Residues Cys113, Cys116, Cys119, Cys123, Cys152, Cys155, Cys158, and Cys162 each contribute to the [4Fe-4S] cluster site.

This sequence belongs to the complex I 23 kDa subunit family. Complex I is composed of 45 different subunits. This is a component of the iron-sulfur (IP) fragment of the enzyme. Interacts with RAB5IF. [4Fe-4S] cluster is required as a cofactor.

It is found in the mitochondrion inner membrane. The catalysed reaction is a ubiquinone + NADH + 5 H(+)(in) = a ubiquinol + NAD(+) + 4 H(+)(out). Core subunit of the mitochondrial membrane respiratory chain NADH dehydrogenase (Complex I) which catalyzes electron transfer from NADH through the respiratory chain, using ubiquinone as an electron acceptor. Essential for the catalytic activity and assembly of complex I. This chain is NADH dehydrogenase [ubiquinone] iron-sulfur protein 8, mitochondrial (Ndufs8), found in Mus musculus (Mouse).